A 261-amino-acid chain; its full sequence is Receptor expression-enhancing protein 4 (261 aa).

Helical transmembrane passes span 1–21 (MVSW…YPAY) and 35–55 (YVRW…ETFT). The disordered stretch occupies residues 167 to 261 (YTDALYPDEP…KKPAQSEPEN (95 aa)). The segment covering 221 to 230 (KSLQRSQSLR) has biased composition (polar residues).

This sequence belongs to the DP1 family. In terms of assembly, interacts with microtubules. During gastrulation, expressed on the dorsal side of the embryo and then in the neural plate and neural tube. At tailbud stages, expressed in the somites, neural tube and otic vesicle.

The protein localises to the endoplasmic reticulum membrane. Microtubule-binding protein required to ensure proper cell division and nuclear envelope reassembly by sequestering the endoplasmic reticulum away from chromosomes during mitosis. Probably acts by clearing the endoplasmic reticulum membrane from metaphase chromosomes. May play a role in the maintenance of both the nervous system and the musculature. The sequence is that of Receptor expression-enhancing protein 4 (reep4) from Xenopus laevis (African clawed frog).